A 540-amino-acid polypeptide reads, in one-letter code: Probable H/ACA ribonucleoprotein complex subunit 4 (540 aa).

The disordered stretch occupies residues 1 to 24; that stretch reads MTTDKKSKSKSSEKSTQEVEQVIK. Residue Asp-109 is the Nucleophile of the active site. Residues 280-355 enclose the PUA domain; it reads YKRIVVKDSA…VVATIKRVIM (76 aa). Residues 414 to 540 form a disordered region; it reads SPVESMNVDT…DKKEKKKSKN (127 aa). The stretch at 448–494 forms a coiled coil; the sequence is KKEKKDKKEKKKDSSDDESEEEKSSKKDKKEKKEKKEKKEKKSSKDD. A compositionally biased stretch (basic residues) spans 473–489; the sequence is KKDKKEKKEKKEKKEKK. 2 stretches are compositionally biased toward basic and acidic residues: residues 490 to 503 and 513 to 528; these read SSKDDSDDESSKKE and SDKDSDSEKESSDKKD. Residues 529–540 are compositionally biased toward basic residues; sequence KKDKKEKKKSKN.

Belongs to the pseudouridine synthase TruB family. In terms of assembly, component of the small nucleolar ribonucleoprotein particles containing H/ACA-type snoRNAs (H/ACA snoRNPs).

The protein resides in the nucleus. Its subcellular location is the nucleolus. The catalysed reaction is a uridine in RNA = a pseudouridine in RNA. Its function is as follows. Plays a central role in ribosomal RNA processing. Probable catalytic subunit of H/ACA small nucleolar ribonucleoprotein (H/ACA snoRNP) complex, which catalyzes pseudouridylation of rRNA. This involves the isomerization of uridine such that the ribose is subsequently attached to C5, instead of the normal N1. Pseudouridine ('psi') residues may serve to stabilize the conformation of rRNAs. The polypeptide is Probable H/ACA ribonucleoprotein complex subunit 4 (nola4) (Dictyostelium discoideum (Social amoeba)).